Here is a 425-residue protein sequence, read N- to C-terminus: CBS domain-containing protein CBSX6 (425 aa).

The region spanning 16 to 90 (GKPEMVEFYE…FLAKTECLQE (75 aa)) is the CBS 1 domain. The span at 159-172 (SENSSSSSGLSADS) shows a compositional bias: low complexity. Residues 159-182 (SENSSSSSGLSADSTNRPTTSMTS) form a disordered region. Positions 173 to 182 (TNRPTTSMTS) are enriched in polar residues. 2 consecutive transmembrane segments (helical) span residues 200–220 (IGVL…LGII) and 275–295 (YLAA…MGVE). The region spanning 347 to 409 (MYRGRSAPLT…TAVTKQPSAF (63 aa)) is the CBS 2 domain.

The protein resides in the vacuole membrane. This is CBS domain-containing protein CBSX6 (CBSX6) from Arabidopsis thaliana (Mouse-ear cress).